The primary structure comprises 157 residues: Phosphopantetheine adenylyltransferase (157 aa).

Threonine 10 serves as a coordination point for substrate. ATP-binding positions include 10–11 and histidine 18; that span reads TF. The substrate site is built by lysine 42, leucine 74, and arginine 88. ATP contacts are provided by residues 89 to 91, glutamate 99, and 124 to 130; these read GLR and NAFISSS.

Belongs to the bacterial CoaD family. As to quaternary structure, homohexamer. Requires Mg(2+) as cofactor.

The protein resides in the cytoplasm. The catalysed reaction is (R)-4'-phosphopantetheine + ATP + H(+) = 3'-dephospho-CoA + diphosphate. The protein operates within cofactor biosynthesis; coenzyme A biosynthesis; CoA from (R)-pantothenate: step 4/5. In terms of biological role, reversibly transfers an adenylyl group from ATP to 4'-phosphopantetheine, yielding dephospho-CoA (dPCoA) and pyrophosphate. In Helicobacter acinonychis (strain Sheeba), this protein is Phosphopantetheine adenylyltransferase.